We begin with the raw amino-acid sequence, 26 residues long: U1-poneritoxin-Ni1b (26 aa).

The protein belongs to the non-disulfide-bridged peptide (NDBP) superfamily. Medium-length antimicrobial peptide (group 3) family. Ponericin-W subfamily. As to expression, expressed by the venom gland.

Its subcellular location is the secreted. It localises to the target cell membrane. In terms of biological role, has a broad spectrum of activity against both Gram-positive and Gram-negative bacteria and S.cerevisiae. Has insecticidal and hemolytic activities. May act by disrupting the integrity of the bacterial cell membrane. This chain is U1-poneritoxin-Ni1b, found in Neoponera inversa (Ant).